The sequence spans 63 residues: Large ribosomal subunit protein uL29 (63 aa).

Belongs to the universal ribosomal protein uL29 family.

This is Large ribosomal subunit protein uL29 from Alcanivorax borkumensis (strain ATCC 700651 / DSM 11573 / NCIMB 13689 / SK2).